The following is an 83-amino-acid chain: U4-theraphotoxin-Hhn1x (83 aa).

The N-terminal stretch at 1–20 is a signal peptide; that stretch reads MTLIAILTCAAALVLHTTAA. A propeptide spanning residues 21-46 is cleaved from the precursor; the sequence is EELEAESQLMEVGMPDTELEAVDEER. Intrachain disulfides connect Cys50–Cys64, Cys54–Cys75, and Cys69–Cys80.

Belongs to the neurotoxin 12 (Hwtx-2) family. 02 (Hwtx-2) subfamily. As to expression, expressed by the venom gland.

Its subcellular location is the secreted. Postsynaptic neurotoxin. The sequence is that of U4-theraphotoxin-Hhn1x from Cyriopagopus hainanus (Chinese bird spider).